Consider the following 1156-residue polypeptide: Nitric oxide synthase, inducible (1156 aa).

A DINNN-motif; mediates interaction with SPSB1, SPSB2 and SPSB4 motif is present at residues 23–27 (DINNN). The interval 27 to 84 (NVGKFYQPPSSPVTQDDPKRHSPGKHGNESPQPLTGTVKTSPESLSKLDAPPSACPRH) is disordered. The segment covering 55 to 70 (ESPQPLTGTVKTSPES) has biased composition (polar residues). 2 residues coordinate Zn(2+): cysteine 110 and cysteine 115. Serine 118 is a (6R)-L-erythro-5,6,7,8-tetrahydrobiopterin binding site. A heme b-binding site is contributed by cysteine 200. Glutamine 263, tryptophan 372, tyrosine 373, and glutamate 377 together coordinate L-arginine. (6R)-L-erythro-5,6,7,8-tetrahydrobiopterin contacts are provided by arginine 381, isoleucine 462, tryptophan 463, and phenylalanine 476. Tyrosine 491 provides a ligand contact to heme b. The tract at residues 515-535 (FKVLVKAVFFASVLMHKAMAS) is calmodulin-binding. In terms of domain architecture, Flavodoxin-like spans 539 to 677 (ATILFATETG…AFRSWAVQTF (139 aa)). FMN is bound by residues threonine 545, glutamate 546, threonine 547, arginine 549, and serine 550. Phosphotyrosine is present on tyrosine 575. Positions 591, 592, 628, 635, 661, and 665 each coordinate FMN. The FAD-binding FR-type domain maps to 730 to 970 (KHVFTMRLKS…VRSASGFQLP (241 aa)). Arginine 750 contributes to the NADP(+) binding site. Residues histidine 772, arginine 906, tyrosine 908, serine 909, threonine 924, and alanine 926 each coordinate FAD. Threonine 929 is a binding site for NADP(+). FAD-binding residues include tyrosine 930, valine 943, cysteine 944, and serine 945. The NADP(+) site is built by threonine 984, arginine 1017, serine 1046, arginine 1047, lysine 1053, tyrosine 1055, glutamine 1057, and aspartate 1090.

The protein belongs to the NOS family. Homodimer. Interacts with NHERF1. Interacts with GAPDH; induced by oxidatively-modified low-densitity lipoprotein (LDL(ox)). Interacts with S100A8 and S100A9 to form the iNOS-S100A8/9 transnitrosylase complex. Interacts with SPSB1, SPSB2 and SPSB4. Interacts with ELOC and CUL5 in the presence of SPSB1 or SPSB2 or SPSB4. Forms a complex with ASL, ASS1 and HSP90AA1; the complex regulates cell-autonomous L-arginine synthesis and citrulline recycling while channeling extracellular L-arginine to nitric oxide synthesis pathway. Heme b is required as a cofactor. It depends on FAD as a cofactor. FMN serves as cofactor. The cofactor is (6R)-L-erythro-5,6,7,8-tetrahydrobiopterin. Polyubiquitinated; mediated by SPSB1, SPSB2 and SPSB4, leading to proteasomal degradation.

Its subcellular location is the cytoplasm. It localises to the cytosol. It carries out the reaction 2 L-arginine + 3 NADPH + 4 O2 + H(+) = 2 L-citrulline + 2 nitric oxide + 3 NADP(+) + 4 H2O. Its activity is regulated as follows. Regulated by calcium/calmodulin. In terms of biological role, produces nitric oxide (NO) which is a messenger molecule with diverse functions throughout the body. In macrophages, NO mediates tumoricidal and bactericidal actions. Also has nitrosylase activity and mediates cysteine S-nitrosylation of cytoplasmic target proteins such PTGS2/COX2. As component of the iNOS-S100A8/9 transnitrosylase complex involved in the selective inflammatory stimulus-dependent S-nitrosylation of GAPDH implicated in regulation of the GAIT complex activity and probably multiple targets including ANXA5, EZR, MSN and VIM. Involved in inflammation, enhances the synthesis of pro-inflammatory mediators such as IL6 and IL8. The polypeptide is Nitric oxide synthase, inducible (NOS2) (Bos taurus (Bovine)).